Reading from the N-terminus, the 486-residue chain is Ribosomal RNA small subunit methyltransferase F (486 aa).

Residues 124 to 130 (ASAPGSK), Glu148, Asp175, and Asp193 each bind S-adenosyl-L-methionine. Catalysis depends on Cys246, which acts as the Nucleophile.

The protein belongs to the class I-like SAM-binding methyltransferase superfamily. RsmB/NOP family.

The protein resides in the cytoplasm. The catalysed reaction is cytidine(1407) in 16S rRNA + S-adenosyl-L-methionine = 5-methylcytidine(1407) in 16S rRNA + S-adenosyl-L-homocysteine + H(+). Functionally, specifically methylates the cytosine at position 1407 (m5C1407) of 16S rRNA. This is Ribosomal RNA small subunit methyltransferase F from Shewanella putrefaciens (strain CN-32 / ATCC BAA-453).